The chain runs to 157 residues: Protein EOLA1 (157 aa).

Positions 6–92 (LSFRQPYAGL…IAGLIDIGET (87 aa)) constitute an ASCH domain.

It belongs to the EOLA family. In terms of assembly, interacts with MT2A.

In terms of biological role, may play a role in cell protection during the inflammatory response. In epithelial cells, negatively regulates IL6 production and apoptosis through the regulation of MT2A expression. The chain is Protein EOLA1 from Mus musculus (Mouse).